We begin with the raw amino-acid sequence, 190 residues long: dCTP deaminase (190 aa).

K107 to R112 lines the dCTP pocket. E133 (proton donor/acceptor) is an active-site residue. Q152, Y166, and Q176 together coordinate dCTP.

The protein belongs to the dCTP deaminase family. As to quaternary structure, homotrimer.

The catalysed reaction is dCTP + H2O + H(+) = dUTP + NH4(+). Its pathway is pyrimidine metabolism; dUMP biosynthesis; dUMP from dCTP (dUTP route): step 1/2. Catalyzes the deamination of dCTP to dUTP. The protein is dCTP deaminase of Campylobacter hominis (strain ATCC BAA-381 / DSM 21671 / CCUG 45161 / LMG 19568 / NCTC 13146 / CH001A).